Reading from the N-terminus, the 427-residue chain is U1 small nuclear ribonucleoprotein 70 kDa (427 aa).

Disordered regions lie at residues 82 to 102 (EPGD…SQKR) and 215 to 427 (RGRT…EYVR). Residues 93-102 (PEVELPSQKR) are compositionally biased toward basic and acidic residues. The RRM domain occupies 138-216 (KTLFVSRLNY…RRVLVDVERG (79 aa)). Gly residues predominate over residues 227–241 (LGGGLGTSRVGGGEE). Composition is skewed to basic and acidic residues over residues 257–402 (EPSR…RYDK) and 409–427 (RYER…EYVR). A Phosphoserine modification is found at S282.

As to quaternary structure, component of the spliceosome. Interacts with CYP63, U2AF35A, U2AF35B, SRZ21, RSZ22, SR34, SR45, SR45A and SCL33. In terms of processing, phosphorylated. The association and dissociation with SR45 is not affected by the phosphorylation status. Ubiquitous.

It is found in the nucleus speckle. The protein localises to the nucleus. It localises to the nucleoplasm. Functionally, mediates the splicing of pre-mRNA by binding to the loop I region of U1-snRNA. This chain is U1 small nuclear ribonucleoprotein 70 kDa (RNU1), found in Arabidopsis thaliana (Mouse-ear cress).